The chain runs to 394 residues: MSKEKFQRIKPHINVGTIGHVDHGKTTLTAAITNVLAKKYGGIPKAFDQIDNAPEEKARGITINTSHVEYDTKIRHYAHVDCPGHADYVKNMITGAAQMDGAILVVAATDGPMPQTREHILLGRQVGVPYIVVFMNKCDMVDDEELLELVEIEIRELLSQYDFPGDEIPIIRGSALKALEKDPIWIQKIIDLSEHLDNYIPEPKRIIDQPFLLPIEDVFSISGRGTVVTGRIERGTVKVGEEIEIIGIKNTVKTTCTGVEMFRKLLDEGRAGENVGILLRGTKREDVERGQVLAKPGSIKPHTQFESEVYVLKKEEGGRHTPFFNGYKPQFYFRTTDVTGSVELQKGTEMVMPGDNVKMLVKLISPIAMDDGLRFAIREGGKTVGAGIVSKIIV.

The region spanning 10–204 (KPHINVGTIG…HLDNYIPEPK (195 aa)) is the tr-type G domain. The G1 stretch occupies residues 19 to 26 (GHVDHGKT). 19-26 (GHVDHGKT) lines the GTP pocket. A Mg(2+)-binding site is contributed by threonine 26. A G2 region spans residues 60–64 (GITIN). The segment at 81-84 (DCPG) is G3. Residues 81 to 85 (DCPGH) and 136 to 139 (NKCD) each bind GTP. The segment at 136 to 139 (NKCD) is G4. The segment at 174 to 176 (SAL) is G5.

This sequence belongs to the TRAFAC class translation factor GTPase superfamily. Classic translation factor GTPase family. EF-Tu/EF-1A subfamily. In terms of assembly, monomer.

It localises to the cytoplasm. It catalyses the reaction GTP + H2O = GDP + phosphate + H(+). Its function is as follows. GTP hydrolase that promotes the GTP-dependent binding of aminoacyl-tRNA to the A-site of ribosomes during protein biosynthesis. The polypeptide is Elongation factor Tu (Wigglesworthia glossinidia brevipalpis).